A 129-amino-acid chain; its full sequence is 3-aminoacrylate deaminase RutC (129 aa).

It belongs to the RutC family.

It carries out the reaction (Z)-3-aminoacrylate + H2O + H(+) = 3-oxopropanoate + NH4(+). Involved in pyrimidine catabolism. Catalyzes the deamination of 3-aminoacrylate to malonic semialdehyde, a reaction that can also occur spontaneously. RutC may facilitate the reaction and modulate the metabolic fitness, rather than catalyzing essential functions. The protein is 3-aminoacrylate deaminase RutC of Rhizobium rhizogenes (strain K84 / ATCC BAA-868) (Agrobacterium radiobacter).